The chain runs to 84 residues: Large ribosomal subunit protein bL27 (84 aa).

Residues 1–22 (MAHKKAGGSTRNGRDSESKRLG) are disordered.

It belongs to the bacterial ribosomal protein bL27 family.

The sequence is that of Large ribosomal subunit protein bL27 from Shewanella pealeana (strain ATCC 700345 / ANG-SQ1).